The following is a 326-amino-acid chain: Homoserine kinase (326 aa).

Belongs to the pseudomonas-type ThrB family.

The catalysed reaction is L-homoserine + ATP = O-phospho-L-homoserine + ADP + H(+). Its pathway is amino-acid biosynthesis; L-threonine biosynthesis; L-threonine from L-aspartate: step 4/5. This chain is Homoserine kinase, found in Sinorhizobium medicae (strain WSM419) (Ensifer medicae).